We begin with the raw amino-acid sequence, 1544 residues long: Lysine-specific demethylase 5B (1544 aa).

Over residues 1–14 (MEPATTLPPGPRPA) the composition is skewed to pro residues. The segment at 1-22 (MEPATTLPPGPRPALPLGGPGP) is disordered. One can recognise a JmjN domain in the interval 32–73 (CPVFEPSWEEFADPFAFIHKIRPIAEQTGICKVRPPPDWQPP). One can recognise an ARID domain in the interval 97–187 (TRVKLNFLDQ…ILNPYNLFLS (91 aa)). Glycyl lysine isopeptide (Lys-Gly) (interchain with G-Cter in SUMO2) cross-links involve residues K148, K204, K209, K242, K274, and K278. The tract at residues 200–228 (TSDTKDKEYKPHDIPQRQSVQPAETCPPA) is disordered. The segment covering 202–214 (DTKDKEYKPHDIP) has biased composition (basic and acidic residues). Positions 269-297 (NEKEMKSTIKQEPTEKKDCELESEKEKPK) are disordered. The PHD-type 1 zinc-finger motif lies at 309–359 (LYVCLLCGSGNDEDRLLLCDGCDDSYHTFCLVPPLHDVPKGDWRCPKCLAQ). Y425 is a binding site for 2-oxoglutarate. A JmjC domain is found at 453-619 (EYLDSGWNLN…LGRQCVEHYR (167 aa)). Residues H499 and E501 each contribute to the Fe cation site. The 2-oxoglutarate site is built by S507, N509, and K517. A Fe cation-binding site is contributed by H587. The segment at 692 to 744 (CIKCKTTCFMSAISCSCKPGLLVCLHHVKELCSCPPYKYNLRYRYTLDDLYPM) adopts a C5HC2 zinc-finger fold. K769 is covalently cross-linked (Glycyl lysine isopeptide (Lys-Gly) (interchain with G-Cter in SUMO2)). The residue at position 832 (K832) is an N6-acetyllysine. S986 carries the phosphoserine modification. A PHD-type 2 zinc finger spans residues 1176–1224 (MKVCLCQKTPATPMIQCELCRDAFHTSCVAAPSISQSSRIWLCPHCRRS). The span at 1297-1314 (QASATDKVSQPPGTTSFS) shows a compositional bias: polar residues. Residues 1297–1318 (QASATDKVSQPPGTTSFSLPDD) are disordered. S1328 carries the phosphoserine modification. Over residues 1374–1388 (PSSVQQADRSSPVRS) the composition is skewed to polar residues. The disordered stretch occupies residues 1374–1447 (PSSVQQADRS…IKLSHPKDMD (74 aa)). A compositionally biased stretch (basic and acidic residues) spans 1389–1427 (SSEKNDCLRGKRDAINSPERKLKRRPEREGLPSERWDRV). Positions 1428–1441 (KHMRTPQKKKIKLS) are enriched in basic residues. K1450 is covalently cross-linked (Glycyl lysine isopeptide (Lys-Gly) (interchain with G-Cter in SUMO2)). At S1456 the chain carries Phosphoserine. The PHD-type 3 zinc-finger motif lies at 1484-1538 (DAICPAVSCLQPEGDEVDWVQCDGSCNQWFHQVCVGVSPEMAEKEDYICVRCTGK).

The protein belongs to the JARID1 histone demethylase family. In terms of assembly, interacts with FOXG1B, PAX9, MYC, MYCN and RB1. Interacts with HDAC1, HDAC4, HDAC5 and HDAC7. Interacts (via PHD-type 1 zinc finger) with histone H3 unmodified at 'Lys-4'; the interaction is inhibited when histone H3 is methylated at 'Arg-2' or 'Lys-4'. Requires Fe(2+) as cofactor. In terms of tissue distribution, present at highest levels in testis, where it is enriched in spermatogonia and pachytene cells (at protein level).

It is found in the nucleus. The enzyme catalyses N(6),N(6),N(6)-trimethyl-L-lysyl(4)-[histone H3] + 3 2-oxoglutarate + 3 O2 = L-lysyl(4)-[histone H3] + 3 formaldehyde + 3 succinate + 3 CO2. In terms of biological role, histone demethylase that demethylates 'Lys-4' of histone H3, thereby playing a central role in histone code. Does not demethylate histone H3 'Lys-9' or H3 'Lys-27'. Demethylates trimethylated, dimethylated and monomethylated H3 'Lys-4'. Acts as a transcriptional corepressor for FOXG1B and PAX9. Represses the CLOCK-BMAL1 heterodimer-mediated transcriptional activation of the core clock component PER2. In Mus musculus (Mouse), this protein is Lysine-specific demethylase 5B (Kdm5b).